The following is a 486-amino-acid chain: Aspartyl/glutamyl-tRNA(Asn/Gln) amidotransferase subunit B (486 aa).

It belongs to the GatB/GatE family. GatB subfamily. In terms of assembly, heterotrimer of A, B and C subunits.

The enzyme catalyses L-glutamyl-tRNA(Gln) + L-glutamine + ATP + H2O = L-glutaminyl-tRNA(Gln) + L-glutamate + ADP + phosphate + H(+). It catalyses the reaction L-aspartyl-tRNA(Asn) + L-glutamine + ATP + H2O = L-asparaginyl-tRNA(Asn) + L-glutamate + ADP + phosphate + 2 H(+). In terms of biological role, allows the formation of correctly charged Asn-tRNA(Asn) or Gln-tRNA(Gln) through the transamidation of misacylated Asp-tRNA(Asn) or Glu-tRNA(Gln) in organisms which lack either or both of asparaginyl-tRNA or glutaminyl-tRNA synthetases. The reaction takes place in the presence of glutamine and ATP through an activated phospho-Asp-tRNA(Asn) or phospho-Glu-tRNA(Gln). This is Aspartyl/glutamyl-tRNA(Asn/Gln) amidotransferase subunit B from Leptospira borgpetersenii serovar Hardjo-bovis (strain JB197).